Consider the following 296-residue polypeptide: Probable AP endonuclease (296 aa).

C16 and C20 form a disulfide bridge. Positions 78, 115, 142, 182, 218, 231, 233, and 271 each coordinate Zn(2+).

Belongs to the AP endonuclease 2 family. Requires Zn(2+) as cofactor.

The protein resides in the host nucleus. The protein localises to the host cytoplasm. It localises to the virion. Endonuclease of the viral base excision repair system that catalyzes DNA cleavage reaction at the apurinic or apyrimidinic sites (AP sites). Cleaves phosphodiester bonds on the 5' side of AP sites. In addition to endonuclease activity, the AP endonuclease has a proofreading 3'-5' exonuclease activity that is considerably more efficient in the elimination of a mismatch than in that of a correctly paired base. Displays 3'-phosphatase and 3'-repair diesterase activities. The single nucleotide gaps generated by the AP endonuclease are filled by the viral repair DNA polymerase X and the DNA ligase. This Ornithodoros (relapsing fever ticks) protein is Probable AP endonuclease.